The primary structure comprises 216 residues: Probable csgAB operon transcriptional regulatory protein (216 aa).

The HTH luxR-type domain occupies 149–214 (NSTESALLTH…QAVSWANDNL (66 aa)). Residues 173-192 (NNEIARSLFISENTVKTHLY) constitute a DNA-binding region (H-T-H motif).

Functionally, the master regulator for adhesive curli fimbriae expression; necessary for transcription of the csgAB operon. Plays a positive role in biofilm formation. This Salmonella typhimurium (strain LT2 / SGSC1412 / ATCC 700720) protein is Probable csgAB operon transcriptional regulatory protein.